The following is a 345-amino-acid chain: Linoleate 10R-lipoxygenase COP4 (345 aa).

5 residues coordinate Mg(2+): Asp-87, Asp-91, Asn-222, Ser-226, and Glu-230. The short motif at 87–91 (DEISD) is the DDXXD motif element.

This sequence belongs to the terpene synthase family. Mg(2+) serves as cofactor.

The catalysed reaction is (2E,6E)-farnesyl diphosphate + H2O = cubebol + diphosphate. The enzyme catalyses (2E,6E)-farnesyl diphosphate = beta-copaene + diphosphate. It carries out the reaction (2E,6E)-farnesyl diphosphate = beta-cubebene + diphosphate. It catalyses the reaction (2E,6E)-farnesyl diphosphate = (+)-sativene + diphosphate. Sesquiterpene synthase that catalyzes the cyclization of farnesyl diphosphate (FPP) into multiple products, including germacrene D, beta-copaene, beta-cubebene, (+)-sativene and cubebol, a natural sesquiterpene alcohol used in the food industry for its cooling and refreshing taste. Terpenoid hydrocarbons resulting from cyclization of farnesyl diphosphate are intermediates in the biosynthesis of biologically active compounds such as antibiotics, toxins and pheromones. This is Linoleate 10R-lipoxygenase COP4 (COP4) from Coprinopsis cinerea (strain Okayama-7 / 130 / ATCC MYA-4618 / FGSC 9003) (Inky cap fungus).